The following is a 444-amino-acid chain: N-succinylarginine dihydrolase (444 aa).

Substrate-binding positions include 19–28 (AGLSFGNVAS), asparagine 110, and 137–138 (HR). Residue glutamate 174 is part of the active site. Position 214 (arginine 214) interacts with substrate. Histidine 250 is an active-site residue. Positions 252 and 362 each coordinate substrate. The active-site Nucleophile is the cysteine 368.

Belongs to the succinylarginine dihydrolase family. In terms of assembly, homodimer.

The catalysed reaction is N(2)-succinyl-L-arginine + 2 H2O + 2 H(+) = N(2)-succinyl-L-ornithine + 2 NH4(+) + CO2. The protein operates within amino-acid degradation; L-arginine degradation via AST pathway; L-glutamate and succinate from L-arginine: step 2/5. Functionally, catalyzes the hydrolysis of N(2)-succinylarginine into N(2)-succinylornithine, ammonia and CO(2). The chain is N-succinylarginine dihydrolase from Shewanella baltica (strain OS223).